Reading from the N-terminus, the 567-residue chain is Potassium-transporting ATPase potassium-binding subunit (567 aa).

Transmembrane regions (helical) follow at residues 5–25, 64–84, 136–156, 179–199, 254–274, 285–305, 332–352, 359–376, 421–441, 486–506, and 529–549; these read GWIQ…PLGG, TTYA…LYML, GLTV…IALI, LYVL…LGVP, ISNM…TNVF, WAIF…CYWA, IAMS…AVIA, ALGG…EIII, MLAV…ASVI, ITIG…AMAI, and LFVG…FFPA.

This sequence belongs to the KdpA family. As to quaternary structure, the system is composed of three essential subunits: KdpA, KdpB and KdpC.

It localises to the cell inner membrane. In terms of biological role, part of the high-affinity ATP-driven potassium transport (or Kdp) system, which catalyzes the hydrolysis of ATP coupled with the electrogenic transport of potassium into the cytoplasm. This subunit binds the periplasmic potassium ions and delivers the ions to the membrane domain of KdpB through an intramembrane tunnel. The sequence is that of Potassium-transporting ATPase potassium-binding subunit from Brucella anthropi (strain ATCC 49188 / DSM 6882 / CCUG 24695 / JCM 21032 / LMG 3331 / NBRC 15819 / NCTC 12168 / Alc 37) (Ochrobactrum anthropi).